Here is a 349-residue protein sequence, read N- to C-terminus: Uroporphyrinogen decarboxylase (349 aa).

Residues 23–27 (RQAGR), Asp-71, Tyr-148, Ser-203, and His-317 each bind substrate.

It belongs to the uroporphyrinogen decarboxylase family. Homodimer.

It localises to the cytoplasm. It carries out the reaction uroporphyrinogen III + 4 H(+) = coproporphyrinogen III + 4 CO2. The protein operates within porphyrin-containing compound metabolism; protoporphyrin-IX biosynthesis; coproporphyrinogen-III from 5-aminolevulinate: step 4/4. Its function is as follows. Catalyzes the decarboxylation of four acetate groups of uroporphyrinogen-III to yield coproporphyrinogen-III. The chain is Uroporphyrinogen decarboxylase from Sorangium cellulosum (strain So ce56) (Polyangium cellulosum (strain So ce56)).